The following is a 205-amino-acid chain: Translation initiation factor 2 subunit beta (205 aa).

Residues 145 to 203 (GIEIGKEYTVTIESTGSAGEGIARYQGYTIYVPKAKKGERVKIIIRKIKRNVAIAELAD) enclose the TRAM domain.

The protein belongs to the eIF-2-beta/eIF-5 family. In terms of assembly, heterotrimer composed of an alpha, a beta and a gamma chain.

Its function is as follows. eIF-2 functions in the early steps of protein synthesis by forming a ternary complex with GTP and initiator tRNA. The polypeptide is Translation initiation factor 2 subunit beta (Picrophilus torridus (strain ATCC 700027 / DSM 9790 / JCM 10055 / NBRC 100828 / KAW 2/3)).